Reading from the N-terminus, the 544-residue chain is Chaperonin GroEL 1 (544 aa).

Residues 29-32 (TLGP), 86-90 (DGTTT), Gly413, and Asp495 each bind ATP. Residues 525–544 (PEPKTNTPASSGSGMSDYDY) are disordered. Positions 528–538 (KTNTPASSGSG) are enriched in polar residues.

It belongs to the chaperonin (HSP60) family. Forms a cylinder of 14 subunits composed of two heptameric rings stacked back-to-back. Interacts with the co-chaperonin GroES.

The protein resides in the cytoplasm. The catalysed reaction is ATP + H2O + a folded polypeptide = ADP + phosphate + an unfolded polypeptide.. In terms of biological role, together with its co-chaperonin GroES, plays an essential role in assisting protein folding. The GroEL-GroES system forms a nano-cage that allows encapsulation of the non-native substrate proteins and provides a physical environment optimized to promote and accelerate protein folding. This is Chaperonin GroEL 1 from Synechococcus sp. (strain JA-2-3B'a(2-13)) (Cyanobacteria bacterium Yellowstone B-Prime).